A 163-amino-acid polypeptide reads, in one-letter code: Shikimate kinase (163 aa).

ATP is bound at residue 10–15; that stretch reads GVGKTT. Position 14 (T14) interacts with Mg(2+). D28, R52, and G75 together coordinate substrate. An ATP-binding site is contributed by R116. R134 is a binding site for substrate.

This sequence belongs to the shikimate kinase family. Monomer. It depends on Mg(2+) as a cofactor.

The protein resides in the cytoplasm. It catalyses the reaction shikimate + ATP = 3-phosphoshikimate + ADP + H(+). It participates in metabolic intermediate biosynthesis; chorismate biosynthesis; chorismate from D-erythrose 4-phosphate and phosphoenolpyruvate: step 5/7. Its function is as follows. Catalyzes the specific phosphorylation of the 3-hydroxyl group of shikimic acid using ATP as a cosubstrate. This chain is Shikimate kinase, found in Streptococcus suis (strain 98HAH33).